Here is a 424-residue protein sequence, read N- to C-terminus: L-glutamine:2-deoxy-scyllo-inosose aminotransferase (424 aa).

Lys202 is modified (N6-(pyridoxal phosphate)lysine).

The protein belongs to the DegT/DnrJ/EryC1 family. L-glutamine:2-deoxy-scyllo-inosose/scyllo-inosose aminotransferase subfamily. Pyridoxal 5'-phosphate is required as a cofactor.

The catalysed reaction is 2-deoxy-L-scyllo-inosose + L-glutamine = 2-deoxy-scyllo-inosamine + 2-oxoglutaramate. The enzyme catalyses 3-amino-2,3-dideoxy-scyllo-inosose + L-glutamine = 2-deoxystreptamine + 2-oxoglutaramate. Its pathway is metabolic intermediate biosynthesis; 2-deoxystreptamine biosynthesis; 2-deoxystreptamine from D-glucose 6-phosphate: step 2/4. It participates in metabolic intermediate biosynthesis; 2-deoxystreptamine biosynthesis; 2-deoxystreptamine from D-glucose 6-phosphate: step 4/4. The protein operates within antibiotic biosynthesis; neomycin biosynthesis. Functionally, catalyzes the PLP-dependent transamination of 2-deoxy-scyllo-inosose (2-DOI) to form 2-deoxy-scyllo-inosamine (2-DOIA) using L-glutamine as the amino donor. Also catalyzes the transamination of 3-amino-2,3-dideoxy-scyllo-inosose (keto-2-DOIA) into 2-deoxystreptamine (2-DOS). This is L-glutamine:2-deoxy-scyllo-inosose aminotransferase (neoB) from Streptomyces fradiae (Streptomyces roseoflavus).